The following is a 178-amino-acid chain: GTP-dependent dephospho-CoA kinase (178 aa).

Residues D55, V57, D74, K76, and E127 each coordinate GTP.

This sequence belongs to the GTP-dependent DPCK family.

The enzyme catalyses 3'-dephospho-CoA + GTP = GDP + CoA + H(+). It functions in the pathway cofactor biosynthesis; coenzyme A biosynthesis. Functionally, catalyzes the GTP-dependent phosphorylation of the 3'-hydroxyl group of dephosphocoenzyme A to form coenzyme A (CoA). This chain is GTP-dependent dephospho-CoA kinase, found in Saccharolobus islandicus (strain Y.G.57.14 / Yellowstone #1) (Sulfolobus islandicus).